The primary structure comprises 574 residues: Alpha-mannosidase I MNS5 (574 aa).

Over 1 to 9 (MSCPIHPRR) the chain is Cytoplasmic. A helical; Signal-anchor for type II membrane protein transmembrane segment spans residues 10-26 (LFLCLLISLTFFVVDPS). The Lumenal portion of the chain corresponds to 27 to 574 (SQHIEVKKKQ…VGYCGLWNPL (548 aa)). N-linked (GlcNAc...) asparagine glycans are attached at residues Asn-89, Asn-107, and Asn-121. Catalysis depends on Glu-134, which acts as the Proton donor. An N-linked (GlcNAc...) asparagine glycan is attached at Asn-201. Asp-274 is an active-site residue. Asn-349 is a glycosylation site (N-linked (GlcNAc...) asparagine). The active-site Proton donor is the Glu-367. Residue Glu-388 is part of the active site. Residue Thr-471 participates in Ca(2+) binding. The N-linked (GlcNAc...) asparagine glycan is linked to Asn-494.

The protein belongs to the glycosyl hydrolase 47 family. It depends on Ca(2+) as a cofactor.

Its subcellular location is the endoplasmic reticulum membrane. It functions in the pathway protein modification; protein glycosylation. Functionally, can convert Man(9)GlcNAc(2) and Man(8)GlcNAc(2) into N-glycans with a terminal alpha-1,6-linked Man residue in the C-branch. Functions in the formation of unique N-glycan structures that are specifically recognized by components of the endoplasmic reticulum-associated degradation (ERAD) machinery, which leads to the degradation of misfolded glycoproteins. Most likely generates N-glycan signal on misfolded glycoproteins that is subsequently recognized by OS9. Required for ERAD of the heavily glycosylated and misfolded BRI1 variants BRI1-5 and BRI1-9. Does not seem to play role in N-glycan processing of correctly folded proteins destined for secretion. The polypeptide is Alpha-mannosidase I MNS5 (MNS5) (Arabidopsis thaliana (Mouse-ear cress)).